The following is a 186-amino-acid chain: Ribosome-recycling factor (186 aa).

It belongs to the RRF family.

Its subcellular location is the cytoplasm. Its function is as follows. Responsible for the release of ribosomes from messenger RNA at the termination of protein biosynthesis. May increase the efficiency of translation by recycling ribosomes from one round of translation to another. The protein is Ribosome-recycling factor of Chlorobium luteolum (strain DSM 273 / BCRC 81028 / 2530) (Pelodictyon luteolum).